Consider the following 128-residue polypeptide: Large ribosomal subunit protein eL8 (128 aa).

The protein belongs to the eukaryotic ribosomal protein eL8 family. As to quaternary structure, part of the 50S ribosomal subunit. Probably part of the RNase P complex.

Its subcellular location is the cytoplasm. Functionally, multifunctional RNA-binding protein that recognizes the K-turn motif in ribosomal RNA, the RNA component of RNase P, box H/ACA, box C/D and box C'/D' sRNAs. This is Large ribosomal subunit protein eL8 from Ignicoccus hospitalis (strain KIN4/I / DSM 18386 / JCM 14125).